The chain runs to 889 residues: Translation initiation factor IF-2 (889 aa).

The disordered stretch occupies residues 1–299 (MTDNKDDKTL…EKFKRSQMQE (299 aa)). Low complexity predominate over residues 61–76 (ITPVAATPAARPAEQR). Over residues 77 to 93 (PMPPQPSGRPAPQPQPH) the composition is skewed to pro residues. Over residues 116–182 (MEARRRALAE…EAEKTEEKVE (67 aa)) the composition is skewed to basic and acidic residues. Residues 196–215 (RPQPGRAAPAATPAAPDGAA) are compositionally biased toward low complexity. Residues 220-231 (RGTESEEDERRR) are compositionally biased toward basic and acidic residues. The tr-type G domain maps to 387-554 (SRPPIVTIMG…AILLQSEILD (168 aa)). Residues 396 to 403 (GHVDHGKT) are G1. Residue 396–403 (GHVDHGKT) participates in GTP binding. Residues 421–425 (GITQH) are G2. Residues 442 to 445 (DTPG) are G3. GTP contacts are provided by residues 442–446 (DTPGH) and 496–499 (NKID). The interval 496–499 (NKID) is G4. The tract at residues 532–534 (SAK) is G5.

It belongs to the TRAFAC class translation factor GTPase superfamily. Classic translation factor GTPase family. IF-2 subfamily.

Its subcellular location is the cytoplasm. In terms of biological role, one of the essential components for the initiation of protein synthesis. Protects formylmethionyl-tRNA from spontaneous hydrolysis and promotes its binding to the 30S ribosomal subunits. Also involved in the hydrolysis of GTP during the formation of the 70S ribosomal complex. In Rhizobium meliloti (strain 1021) (Ensifer meliloti), this protein is Translation initiation factor IF-2.